A 529-amino-acid polypeptide reads, in one-letter code: Low affinity inorganic phosphate transporter 4 (529 aa).

Residues 1–21 (MASDNLVVLNALDTARTQWYH) are Cytoplasmic-facing. The chain crosses the membrane as a helical span at residues 22-42 (VTAVIIAGMGFFTDAYDLFCI). Over 43-71 (STVSKLLGRLYYYDPSTKAPGKLPHMANN) the chain is Extracellular. A helical transmembrane segment spans residues 72–92 (WVIGVALVGTLSGQLVFGWLG). Residues 93–99 (DKLGRKK) lie on the Cytoplasmic side of the membrane. A helical transmembrane segment spans residues 100 to 120 (VYGLTLILMVICALCSGLSLG). Residues 121-125 (YSPKS) are Extracellular-facing. Residues 126–146 (VIGTLCFFRFWLGFGIGGDYP) traverse the membrane as a helical segment. Topologically, residues 147-161 (LSATIMSEYANKSTR) are cytoplasmic. The chain crosses the membrane as a helical span at residues 162–182 (GAFIAAVFAMQGVGIIFAGLV). Topologically, residues 183 to 211 (SMTISKVFLMNFEGKPFNVDEVLSTEPEA) are extracellular. Residues 212 to 232 (DYVWRIVLMLGALPALLTYYW) form a helical membrane-spanning segment. Topologically, residues 233–291 (RMKMPETGRYTAIIEGNAKQAAIDMGKVLDIEIQAEGDKLAQFKAANEYSLLSNEFFQR) are cytoplasmic. Residues 292 to 312 (HGLHLIGTMSTWFLLDIAFYS) traverse the membrane as a helical segment. Over 313–344 (QNLTQKDIFPVMGLTSKANTISALREMFETSR) the chain is Extracellular. N314 carries an N-linked (GlcNAc...) asparagine glycan. Residues 345–365 (AMFVIALFGTFPGYWFTVFFI) form a helical membrane-spanning segment. Residues 366–374 (EKIGRFKIQ) lie on the Cytoplasmic side of the membrane. A helical transmembrane segment spans residues 375-395 (LVGFFMMSVFMAIIGVKYDYL). The Extracellular portion of the chain corresponds to 396-405 (RNKEHKWTFA). The chain crosses the membrane as a helical span at residues 406–426 (ALYGLTFFFANFGPNSTTFVL). The Cytoplasmic portion of the chain corresponds to 427-437 (PAELFPTRVRS). The helical transmembrane segment at 438-458 (TCHALSAALGKAGAMISAFGI) threads the bilayer. Topologically, residues 459–471 (QQYTQDQDVRKIK) are extracellular. The helical transmembrane segment at 472–492 (TAMLLLAFTNMVGFCCTFLVT) threads the bilayer. Residues 493–529 (ETKGRSLEEISGEDGRQNETQMKTTRPVSGHPDDGWE) lie on the Cytoplasmic side of the membrane. Residues 501-529 (EISGEDGRQNETQMKTTRPVSGHPDDGWE) form a disordered region. The segment covering 510-519 (NETQMKTTRP) has biased composition (polar residues).

Belongs to the major facilitator superfamily. Phosphate:H(+) symporter (TC 2.A.1.9) family.

Its subcellular location is the cell membrane. The enzyme catalyses phosphate(in) + H(+)(in) = phosphate(out) + H(+)(out). Functionally, low-affinity transporter for external inorganic phosphate (Pi) probably involved in the acquisition of phosphate released by arbuscular mycorrhizal (AM) fungi (e.g. Rhizophagus irregularis and Glomus intraradices) during AM symbiosis. Acts as a Pi-sensing machinery at the root tip level, independently of AM fungi, involved in the regulation of early root branching and lateral roots formation. The polypeptide is Low affinity inorganic phosphate transporter 4 (Petunia hybrida (Petunia)).